We begin with the raw amino-acid sequence, 947 residues long: Vacuolar membrane protease (947 aa).

Over 1-15 (MRFKALLRAIFRFRK) the chain is Cytoplasmic. The helical transmembrane segment at 16–36 (TNFSILLIITYAIIIALLVFD) threads the bilayer. Topologically, residues 37–358 (RSRYKLDLPN…GLFFVVVDTK (322 aa)) are vacuolar. 4 N-linked (GlcNAc...) asparagine glycosylation sites follow: Asn46, Asn92, Asn108, and Asn121. Zn(2+) contacts are provided by His156 and Asp168. The active-site Proton acceptor is the Glu200. Zn(2+)-binding residues include Glu201, Glu226, and His300. Asn319 carries an N-linked (GlcNAc...) asparagine glycan. Residues 359-379 (HLFYADIFMLIVGPILLMMKA) traverse the membrane as a helical segment. Residues 380–391 (HLDKRRRLERSR) are Cytoplasmic-facing. The helical transmembrane segment at 392-412 (LVQLRLLLSLGLSVVFLLLLT) threads the bilayer. Topologically, residues 413 to 428 (KSLNSFNPFVYSADYR) are vacuolar. A helical transmembrane segment spans residues 429-449 (TPLTGLFLLFVTVNYLIVTLA). At 450–458 (ERLNPTESY) the chain is on the cytoplasmic side. The chain crosses the membrane as a helical span at residues 459–479 (KTVAINQIFIIAWLMQLYITL). Residues 480–489 (RMAKSDFTLT) lie on the Vacuolar side of the membrane. The helical transmembrane segment at 490-510 (GTYPLSIFSGCLIVALSLGLF) threads the bilayer. Topologically, residues 511-601 (GTKNKAVNDA…DKNSDFSKHY (91 aa)) are cytoplasmic. Polar residues-rich tracts occupy residues 522–531 (NSSVRYASSQ) and 546–567 (NINQ…TDLH). The tract at residues 522-573 (NSSVRYASSQNDEDNPLPSQDRGENINQVRDTGNQEVTSNTNTDLHSNAEEV) is disordered. A helical membrane pass occupies residues 602–622 (NWIVQFLCIVPISSFIFLFSL). The Vacuolar segment spans residues 623–641 (DYTLDAIHKMVQETTDDVQ). A helical transmembrane segment spans residues 642–662 (LICIIITIGVILLALPILPFI). Topologically, residues 663–669 (SKLNYQS) are cytoplasmic. The chain crosses the membrane as a helical span at residues 670 to 690 (SVIIAIIGVLLFGKSLVMQPF). The Vacuolar portion of the chain corresponds to 691 to 947 (SEIAPLKVRF…LVVIKDKIQL (257 aa)). Residues Asn742, Asn784, Asn801, and Asn833 are each glycosylated (N-linked (GlcNAc...) asparagine).

Belongs to the peptidase M28 family. Zn(2+) serves as cofactor.

The protein localises to the vacuole membrane. May be involved in vacuolar sorting and osmoregulation. In Candida glabrata (strain ATCC 2001 / BCRC 20586 / JCM 3761 / NBRC 0622 / NRRL Y-65 / CBS 138) (Yeast), this protein is Vacuolar membrane protease.